The primary structure comprises 30 residues: ATP-dependent Clp protease ATP-binding subunit ClpA homolog (30 aa).

This sequence belongs to the ClpA/ClpB family.

The protein localises to the plastid. It localises to the chloroplast. Functionally, may interact with a ClpP-like protease involved in degradation of denatured proteins in the chloroplast. The chain is ATP-dependent Clp protease ATP-binding subunit ClpA homolog from Pinus pinaster (Maritime pine).